A 508-amino-acid chain; its full sequence is Drug efflux pump JefA (508 aa).

14 consecutive transmembrane segments (helical) span residues 9–29 (VLATGLGIFMVFVDVNIVNVA), 46–66 (WAVAGYSLGMAAVLMSCALLG), 75–95 (FVFGVTLFVVSSIVCVLPVSL), 104–124 (IQGLGAAFISVLSLALLSHSF), 136–156 (NWMAIGMVGAASAPALGGLMV), 163–183 (SVFLVNVPLGAIVWLLTLVGV), 194–214 (LDWVGQLTLIPAVALIAYTII), 222–242 (QSAGFVAALLLAAGVLLWLFV), 265–285 (SVLIVYFVVMSCFFGTLMVIT), 297–317 (LHAGLMMLPVPAGFGVASLLA), 328–348 (LPVLTCLAAMFIGLAIFAISM), 354–374 (VALVGLTIFGAGAGGCATPLL), 399–419 (LGGIFGVAFLGTIVAAWLGAA), and 479–499 (GIKLALGGAAVLLTGAFVLGW).

Belongs to the major facilitator superfamily.

The protein resides in the cell inner membrane. Involved in resistance to ethambutol and isoniazid. This Mycobacterium tuberculosis (strain CDC 1551 / Oshkosh) protein is Drug efflux pump JefA.